Reading from the N-terminus, the 81-residue chain is Large ribosomal subunit protein bL27 (81 aa).

The segment covering Met-1–Lys-11 has biased composition (polar residues). Residues Met-1 to Ser-26 form a disordered region.

Belongs to the bacterial ribosomal protein bL27 family.

The polypeptide is Large ribosomal subunit protein bL27 (Borrelia turicatae (strain 91E135)).